We begin with the raw amino-acid sequence, 73 residues long: UPF0337 protein lp_1708 (73 aa).

Composition is skewed to basic and acidic residues over residues 1-35 (MSDV…REAQ) and 44-73 (KAKD…KSDD). Residues 1-73 (MSDVNKKFDS…KDKMKKKSDD (73 aa)) form a disordered region.

This sequence belongs to the UPF0337 (CsbD) family.

The protein is UPF0337 protein lp_1708 of Lactiplantibacillus plantarum (strain ATCC BAA-793 / NCIMB 8826 / WCFS1) (Lactobacillus plantarum).